The following is an 895-amino-acid chain: WD repeat-containing protein 36 (895 aa).

8 WD repeats span residues 30–63, 72–101, 110–143, 152–186, 193–230, 237–272, 277–320, and 327–361; these read VVRF…LVAV, CCMA…IVHT, HFLQ…LQLT, SAIL…LLYT, GVTA…MKFR, TSIS…INQM, STAI…RFRM, and TNIR…FNKS. 2 positions are modified to phosphoserine: Ser382 and Ser399. WD repeat units follow at residues 389–428, 441–475, 486–522, 527–562, 564–605, and 607–645; these read TKFA…GAYF, ATAV…HRGS, VRGV…HSVS, PNIM…VREF, GHQG…DCFL, and DSAP…SVVS.

In terms of assembly, part of the small subunit (SSU) processome, composed of more than 70 proteins and the RNA chaperone small nucleolar RNA (snoRNA) U3. As to expression, expressed in heart, placenta, liver, skeletal muscle, kidney and pancreas. In ocular tissues, strong expression in iris, sclera, ciliary muscle, ciliary body, retina and optic nerve.

The protein resides in the nucleus. Its subcellular location is the nucleolus. Functionally, part of the small subunit (SSU) processome, first precursor of the small eukaryotic ribosomal subunit. During the assembly of the SSU processome in the nucleolus, many ribosome biogenesis factors, an RNA chaperone and ribosomal proteins associate with the nascent pre-rRNA and work in concert to generate RNA folding, modifications, rearrangements and cleavage as well as targeted degradation of pre-ribosomal RNA by the RNA exosome. Involved in the nucleolar processing of SSU 18S rRNA. Involved in T-cell activation and highly coregulated with IL2. In Homo sapiens (Human), this protein is WD repeat-containing protein 36.